Reading from the N-terminus, the 392-residue chain is Na(+)/H(+) antiporter NhaA 2 (392 aa).

11 helical membrane-spanning segments follow: residues 20-40, 61-81, 99-119, 127-147, 158-178, 181-201, 209-229, 265-285, 298-318, 336-356, and 365-385; these read FFAAESAGGLVLMAAALAALI, LSVSHWINDGLMAIFFMLVGL, ALPGFAALGGMLVPALIYVAF, IGGWAIPAATDIAFALGVLSL, IFLSALAILDDLGAVLIIALF, SDLSIPMLLAALGSIAMLVAL, LLPYLIVGALLWFFMLQSGIH, VAFAVVPIFGFANAGVSLSGI, VALGLLVGKQVGIFAMAALAI, GVAALCGIGFTMSLFIGALAF, and EVKVGVLIGSVLSAVLGVVVL.

Belongs to the NhaA Na(+)/H(+) (TC 2.A.33) antiporter family.

Its subcellular location is the cell inner membrane. The enzyme catalyses Na(+)(in) + 2 H(+)(out) = Na(+)(out) + 2 H(+)(in). In terms of biological role, na(+)/H(+) antiporter that extrudes sodium in exchange for external protons. This chain is Na(+)/H(+) antiporter NhaA 2, found in Pseudomonas syringae pv. syringae (strain B728a).